A 476-amino-acid chain; its full sequence is Stromelysin-2 (476 aa).

The signal sequence occupies residues methionine 1–alanine 17. Residues tyrosine 18–histidine 98 constitute a propeptide, activation peptide. Residues proline 89–valine 96 carry the Cysteine switch motif. 6 residues coordinate Zn(2+): cysteine 91, histidine 167, aspartate 169, histidine 182, histidine 195, and histidine 217. Residue glutamate 218 is part of the active site. The Zn(2+) site is built by histidine 221 and histidine 227. 4 Hemopexin repeats span residues proline 286–leucine 335, proline 336–proline 382, isoleucine 384–valine 432, and glutamate 433–cysteine 476. A disulfide bond links cysteine 289 and cysteine 476.

Belongs to the peptidase M10A family. The cofactor is Zn(2+). Requires Ca(2+) as cofactor.

The protein localises to the secreted. It localises to the extracellular space. Its subcellular location is the extracellular matrix. The enzyme catalyses Similar to stromelysin 1, but action on collagen types III, IV and V is weak.. Can degrade fibronectin, gelatins of type I, III, IV, and V; weakly collagens III, IV, and V. Activates procollagenase. This Homo sapiens (Human) protein is Stromelysin-2 (MMP10).